The sequence spans 97 residues: HssA/B-like protein 44 (97 aa).

Disordered stretches follow at residues 1-22 (MTLF…SSIA) and 62-97 (ASTS…CGCN). Basic residues predominate over residues 72 to 84 (RPGRGHGGPHGHG). Gly residues predominate over residues 85 to 97 (RGGSGSGSSCGCN).

Belongs to the hssA/B family.

The sequence is that of HssA/B-like protein 44 (hssl44) from Dictyostelium discoideum (Social amoeba).